Consider the following 290-residue polypeptide: 33 kDa chaperonin (290 aa).

2 disulfide bridges follow: cysteine 235–cysteine 237 and cysteine 268–cysteine 271.

It belongs to the HSP33 family. In terms of processing, under oxidizing conditions two disulfide bonds are formed involving the reactive cysteines. Under reducing conditions zinc is bound to the reactive cysteines and the protein is inactive.

The protein localises to the cytoplasm. Redox regulated molecular chaperone. Protects both thermally unfolding and oxidatively damaged proteins from irreversible aggregation. Plays an important role in the bacterial defense system toward oxidative stress. This chain is 33 kDa chaperonin, found in Streptococcus pyogenes serotype M12 (strain MGAS2096).